A 546-amino-acid polypeptide reads, in one-letter code: Probable E3 ubiquitin-protein ligase NGR_a03640 (546 aa).

A disordered region spans residues 1–70; the sequence is MNVQRPGLAV…RPWEGRPQEA (70 aa). Residues 1–248 form an interaction with target proteins region; the sequence is MNVQRPGLAV…YAGPQIFLPM (248 aa). Residues 22–48 show a composition bias toward low complexity; that stretch reads SEPGSPAAAARWVEASTEAEASAASSS. Residues 58-67 are compositionally biased toward basic and acidic residues; sequence AEERPWEGRP. LRR repeat units follow at residues 104–125, 126–144, 145–166, 167–186, and 187–208; these read GLRR…LPGT, LLEL…DLPA, GLQR…LPAA, LEWL…MIPP, and ELIW…LLTQ. Positions 249–256 are linker; the sequence is GPVELARR. The 290-residue stretch at 257-546 folds into the NEL domain; sequence PLHEVVADWL…KVLRGRGLEL (290 aa). The E3 ubiquitin-protein ligase catalytic domain stretch occupies residues 257–546; that stretch reads PLHEVVADWL…KVLRGRGLEL (290 aa). Catalysis depends on Cys338, which acts as the Glycyl thioester intermediate.

The protein belongs to the LRR-containing bacterial E3 ligase family. Post-translationally, ubiquitinated in the presence of host E1 ubiquitin-activating enzyme, E2 ubiquitin-conjugating enzyme and ubiquitin.

Its subcellular location is the secreted. The protein resides in the host cytoplasm. Effector proteins function to alter host cell physiology and promote bacterial survival in host tissues. This protein is an E3 ubiquitin ligase that interferes with host's ubiquitination pathway. The sequence is that of Probable E3 ubiquitin-protein ligase NGR_a03640 from Sinorhizobium fredii (strain NBRC 101917 / NGR234).